The following is a 542-amino-acid chain: Heterogeneous nuclear ribonucleoprotein L-like (542 aa).

The interval 1–71 (MSSSSSSPRE…QPEAGGSHHK (71 aa)) is disordered. Over residues 18 to 29 (YESQAKRLKTEE) the composition is skewed to basic and acidic residues. A Glycyl lysine isopeptide (Lys-Gly) (interchain with G-Cter in SUMO2) cross-link involves residue Lys26. Ser35 carries the post-translational modification Phosphoserine. Thr46 carries the phosphothreonine modification. Over residues 48 to 58 (RGGGDGGGGGR) the composition is skewed to gly residues. Phosphoserine is present on residues Ser59, Ser68, and Ser75. 3 RRM domains span residues 76 to 150 (PVVH…YSTS), 166 to 244 (NKVL…YARP), and 335 to 409 (SVVM…VSKQ). A Glycyl lysine isopeptide (Lys-Gly) (interchain with G-Cter in SUMO2) cross-link involves residue Lys491.

In terms of assembly, interacts with HNRNPL. As to expression, widely expressed. Detected in bone marrow stroma cells, skeletal muscle, heart, placenta, pancreas, kidney and lung.

Its function is as follows. RNA-binding protein that functions as a regulator of alternative splicing for multiple target mRNAs, including PTPRC/CD45 and STAT5A. Required for alternative splicing of PTPRC. The protein is Heterogeneous nuclear ribonucleoprotein L-like (HNRNPLL) of Homo sapiens (Human).